A 253-amino-acid polypeptide reads, in one-letter code: Phosphate import ATP-binding protein PstB (253 aa).

The 243-residue stretch at 7-249 folds into the ABC transporter domain; it reads ASAKNLNLWY…PQSSKTKRYI (243 aa). 39 to 46 contacts ATP; that stretch reads GPSGCGKS.

This sequence belongs to the ABC transporter superfamily. Phosphate importer (TC 3.A.1.7) family. As to quaternary structure, the complex is composed of two ATP-binding proteins (PstB), two transmembrane proteins (PstC and PstA) and a solute-binding protein (PstS).

The protein resides in the cell inner membrane. It carries out the reaction phosphate(out) + ATP + H2O = ADP + 2 phosphate(in) + H(+). Its function is as follows. Part of the ABC transporter complex PstSACB involved in phosphate import. Responsible for energy coupling to the transport system. This Ehrlichia ruminantium (strain Gardel) protein is Phosphate import ATP-binding protein PstB.